A 278-amino-acid chain; its full sequence is Protein irg-2 (278 aa).

A disordered region spans residues 152-179 (NSIRGQPFKSLQPENRTPTQVTGHQQES). Over residues 163-179 (QPENRTPTQVTGHQQES) the composition is skewed to polar residues.

Plays a role in innate immunity by conferring resistance to virulent strains of the Gram-negative bacterium P.aeruginosa via the zip-2 pathway and independent of the pmk-1 p38MAPK pathway. Induced as part of several immune responses to translational inhibition arising from endocytosis of ToxA during P.aeruginosa infection or exposure to exogenous cycloheximide. In Caenorhabditis elegans, this protein is Protein irg-2.